The chain runs to 139 residues: ATP synthase epsilon chain (139 aa).

The protein belongs to the ATPase epsilon chain family. F-type ATPases have 2 components, CF(1) - the catalytic core - and CF(0) - the membrane proton channel. CF(1) has five subunits: alpha(3), beta(3), gamma(1), delta(1), epsilon(1). CF(0) has three main subunits: a, b and c.

The protein resides in the cell membrane. Produces ATP from ADP in the presence of a proton gradient across the membrane. This Streptococcus sanguinis protein is ATP synthase epsilon chain.